Reading from the N-terminus, the 552-residue chain is Non-structural protein NS1 (552 aa).

This sequence belongs to the orbivirus non-structural protein NS1 family.

The polypeptide is Non-structural protein NS1 (Segment-5) (Bluetongue virus 10 (isolate USA) (BTV 10)).